Here is a 364-residue protein sequence, read N- to C-terminus: Phosphoserine aminotransferase (364 aa).

Arg-41 serves as a coordination point for L-glutamate. Pyridoxal 5'-phosphate is bound by residues 75–76 (AS), Trp-100, Thr-155, Asp-175, and Gln-198. Residue Lys-199 is modified to N6-(pyridoxal phosphate)lysine. 239–240 (NT) serves as a coordination point for pyridoxal 5'-phosphate.

This sequence belongs to the class-V pyridoxal-phosphate-dependent aminotransferase family. SerC subfamily. As to quaternary structure, homodimer. The cofactor is pyridoxal 5'-phosphate.

It is found in the cytoplasm. It catalyses the reaction O-phospho-L-serine + 2-oxoglutarate = 3-phosphooxypyruvate + L-glutamate. The enzyme catalyses 4-(phosphooxy)-L-threonine + 2-oxoglutarate = (R)-3-hydroxy-2-oxo-4-phosphooxybutanoate + L-glutamate. It functions in the pathway amino-acid biosynthesis; L-serine biosynthesis; L-serine from 3-phospho-D-glycerate: step 2/3. Its function is as follows. Catalyzes the reversible conversion of 3-phosphohydroxypyruvate to phosphoserine and of 3-hydroxy-2-oxo-4-phosphonooxybutanoate to phosphohydroxythreonine. The chain is Phosphoserine aminotransferase from Streptococcus uberis (strain ATCC BAA-854 / 0140J).